We begin with the raw amino-acid sequence, 634 residues long: Threonine--tRNA ligase (634 aa).

Residues 1-61 (MINIRFPDGS…NSNCELRLIT (61 aa)) enclose the TGS domain. Residues 241-532 (DHRKIGKVLD…LIEHYAGNLP (292 aa)) are catalytic. Cys332, His383, and His509 together coordinate Zn(2+).

The protein belongs to the class-II aminoacyl-tRNA synthetase family. Homodimer. Zn(2+) serves as cofactor.

The protein localises to the cytoplasm. The catalysed reaction is tRNA(Thr) + L-threonine + ATP = L-threonyl-tRNA(Thr) + AMP + diphosphate + H(+). Functionally, catalyzes the attachment of threonine to tRNA(Thr) in a two-step reaction: L-threonine is first activated by ATP to form Thr-AMP and then transferred to the acceptor end of tRNA(Thr). Also edits incorrectly charged L-seryl-tRNA(Thr). This Francisella tularensis subsp. tularensis (strain WY96-3418) protein is Threonine--tRNA ligase.